The primary structure comprises 604 residues: Phosphomethylpyrimidine synthase (604 aa).

Substrate contacts are provided by residues Asn-218, Met-247, Tyr-276, His-312, 332–334 (SRG), 373–376 (DGLR), and Glu-412. Zn(2+) is bound at residue His-416. Substrate is bound at residue Tyr-439. His-480 contacts Zn(2+). Residues Cys-560, Cys-563, and Cys-568 each coordinate [4Fe-4S] cluster.

The protein belongs to the ThiC family. In terms of assembly, homodimer. [4Fe-4S] cluster serves as cofactor.

It catalyses the reaction 5-amino-1-(5-phospho-beta-D-ribosyl)imidazole + S-adenosyl-L-methionine = 4-amino-2-methyl-5-(phosphooxymethyl)pyrimidine + CO + 5'-deoxyadenosine + formate + L-methionine + 3 H(+). The protein operates within cofactor biosynthesis; thiamine diphosphate biosynthesis. Functionally, catalyzes the synthesis of the hydroxymethylpyrimidine phosphate (HMP-P) moiety of thiamine from aminoimidazole ribotide (AIR) in a radical S-adenosyl-L-methionine (SAM)-dependent reaction. The protein is Phosphomethylpyrimidine synthase of Zymomonas mobilis subsp. mobilis (strain ATCC 31821 / ZM4 / CP4).